Consider the following 462-residue polypeptide: L-seryl-tRNA(Sec) selenium transferase (462 aa).

At K292 the chain carries N6-(pyridoxal phosphate)lysine.

Belongs to the SelA family. Pyridoxal 5'-phosphate serves as cofactor.

It localises to the cytoplasm. It carries out the reaction L-seryl-tRNA(Sec) + selenophosphate + H(+) = L-selenocysteinyl-tRNA(Sec) + phosphate. The protein operates within aminoacyl-tRNA biosynthesis; selenocysteinyl-tRNA(Sec) biosynthesis; selenocysteinyl-tRNA(Sec) from L-seryl-tRNA(Sec) (bacterial route): step 1/1. Its function is as follows. Converts seryl-tRNA(Sec) to selenocysteinyl-tRNA(Sec) required for selenoprotein biosynthesis. This chain is L-seryl-tRNA(Sec) selenium transferase, found in Clostridium perfringens (strain 13 / Type A).